The chain runs to 161 residues: Allophycocyanin beta chain (161 aa).

Asn-71 bears the N4-methylasparagine mark. Cys-81 is a binding site for (2R,3E)-phycocyanobilin.

It belongs to the phycobiliprotein family. In terms of assembly, heterodimer of an alpha and a beta chain. Post-translationally, contains one covalently linked phycocyanobilin chromophore.

Its subcellular location is the plastid. The protein resides in the cyanelle thylakoid membrane. Functionally, light-harvesting photosynthetic bile pigment-protein from the phycobiliprotein complex. Allophycocyanin has a maximum absorption at approximately 650 nanometers. This is Allophycocyanin beta chain (apcB) from Cyanophora paradoxa.